The following is a 108-amino-acid chain: Cell cycle protein GpsB (108 aa).

Residues 32–69 adopt a coiled-coil conformation; the sequence is LDNVIKDYENFNAQIEALKAENEALKKAKFQARNTVSA.

It belongs to the GpsB family. In terms of assembly, forms polymers through the coiled coil domains. Interacts with PBP1, MreC and EzrA.

The protein resides in the cytoplasm. Its function is as follows. Divisome component that associates with the complex late in its assembly, after the Z-ring is formed, and is dependent on DivIC and PBP2B for its recruitment to the divisome. Together with EzrA, is a key component of the system that regulates PBP1 localization during cell cycle progression. Its main role could be the removal of PBP1 from the cell pole after pole maturation is completed. Also contributes to the recruitment of PBP1 to the division complex. Not essential for septum formation. The polypeptide is Cell cycle protein GpsB (Streptococcus pyogenes serotype M28 (strain MGAS6180)).